The following is a 90-amino-acid chain: Probable Fe(2+)-trafficking protein (90 aa).

This sequence belongs to the Fe(2+)-trafficking protein family.

Its function is as follows. Could be a mediator in iron transactions between iron acquisition and iron-requiring processes, such as synthesis and/or repair of Fe-S clusters in biosynthetic enzymes. In Pseudomonas entomophila (strain L48), this protein is Probable Fe(2+)-trafficking protein.